We begin with the raw amino-acid sequence, 1011 residues long: Rap guanine nucleotide exchange factor 4 (1011 aa).

One can recognise a DEP domain in the interval serine 216–aspartate 291. Residues glycine 422–alanine 425 and arginine 432–alanine 433 contribute to the 3',5'-cyclic AMP site. The 139-residue stretch at glutamine 496–serine 634 folds into the N-terminal Ras-GEF domain. Positions serine 772–arginine 1009 constitute a Ras-GEF domain.

In terms of assembly, interacts with RAP1B, RIMS1 and RIMS2. Probably part of a complex with RIMS2 and GTP-activated RAB3A. Expressed in cerebellum, pituitary, adrenal gland and liver.

Its subcellular location is the cytoplasm. It localises to the membrane. In terms of biological role, guanine nucleotide exchange factor (GEF) for RAP1A, RAP1B and RAP2A small GTPases that is activated by binding cAMP. Seems not to activate RAB3A. Involved in cAMP-dependent, PKA-independent exocytosis through interaction with RIMS2. In Mus musculus (Mouse), this protein is Rap guanine nucleotide exchange factor 4 (Rapgef4).